The following is a 270-amino-acid chain: UBX domain-containing protein 8 (270 aa).

Residue Met-1 is a topological domain, cytoplasmic. The helical transmembrane segment at 2-22 (ASRGVVGIFFLSAVPLVCLEL) threads the bilayer. At 23–33 (RRGIPDIGIKD) the chain is on the lumenal side. The helical transmembrane segment at 34-54 (FLLLCGRILLLLALLTLIISV) threads the bilayer. The Cytoplasmic portion of the chain corresponds to 55-270 (TTSWLNSFKS…LILEEKEQTN (216 aa)). Residues 130 to 171 (SGHKLGGDEGTSQTSFETSNREAAKSQNLPKPLTEFPSPAEQ) are disordered. Ser-167 carries the phosphoserine modification. One can recognise a UBX domain in the interval 187 to 263 (TAEEVVTVAL…GITVDTVLIL (77 aa)).

As to quaternary structure, interacts with SYVN1 and VCP. In terms of tissue distribution, expressed abundantly in ovary and testis, and weakly in all other tissues tested.

It localises to the endoplasmic reticulum membrane. Its function is as follows. Involved in endoplasmic reticulum-associated degradation (ERAD) for misfolded lumenal proteins, possibly by tethering VCP to the endoplasmic reticulum membrane. May play a role in reproduction. This chain is UBX domain-containing protein 8 (UBXN8), found in Homo sapiens (Human).